We begin with the raw amino-acid sequence, 251 residues long: Triosephosphate isomerase 1 (251 aa).

9 to 11 (NWK) provides a ligand contact to substrate. Catalysis depends on histidine 95, which acts as the Electrophile. Glutamate 167 serves as the catalytic Proton acceptor. Substrate-binding positions include glycine 173, serine 213, and 234-235 (GG).

It belongs to the triosephosphate isomerase family. In terms of assembly, homodimer.

Its subcellular location is the cytoplasm. It catalyses the reaction D-glyceraldehyde 3-phosphate = dihydroxyacetone phosphate. It participates in carbohydrate biosynthesis; gluconeogenesis. Its pathway is carbohydrate degradation; glycolysis; D-glyceraldehyde 3-phosphate from glycerone phosphate: step 1/1. In terms of biological role, involved in the gluconeogenesis. Catalyzes stereospecifically the conversion of dihydroxyacetone phosphate (DHAP) to D-glyceraldehyde-3-phosphate (G3P). The chain is Triosephosphate isomerase 1 from Listeria innocua serovar 6a (strain ATCC BAA-680 / CLIP 11262).